A 156-amino-acid chain; its full sequence is Transcription elongation factor GreA (156 aa).

Residues 8–75 adopt a coiled-coil conformation; that stretch reads LTKEGYEKLK…ELENMLSKAE (68 aa).

It belongs to the GreA/GreB family.

Functionally, necessary for efficient RNA polymerase transcription elongation past template-encoded arresting sites. The arresting sites in DNA have the property of trapping a certain fraction of elongating RNA polymerases that pass through, resulting in locked ternary complexes. Cleavage of the nascent transcript by cleavage factors such as GreA or GreB allows the resumption of elongation from the new 3'terminus. GreA releases sequences of 2 to 3 nucleotides. The chain is Transcription elongation factor GreA from Thermosipho melanesiensis (strain DSM 12029 / CIP 104789 / BI429).